We begin with the raw amino-acid sequence, 468 residues long: GDNF family receptor alpha-1 (468 aa).

A signal peptide spans 1–24 (MFLATLYFALPLLDLLMSAEVSGG). Repeat copies occupy residues 25 to 113 (DRLD…LQGN), 150 to 238 (KGNN…YEER), and 239 to 342 (ERPN…KNAI). A disulfide bridge connects residues C36 and C42. The N-linked (GlcNAc...) asparagine glycan is linked to N59. 10 disulfide bridges follow: C154–C214, C161–C167, C178–C192, C187–C233, C216–C221, C243–C313, C250–C256, C267–C285, C277–C337, and C315–C325. N-linked (GlcNAc...) asparagine glycans are attached at residues N347 and N406. Residue S430 is the site of GPI-anchor amidated serine attachment. A propeptide spans 431-468 (HITTKSMAAPPSCSLSSLPVLMLTALAALLSVSLAETS) (removed in mature form).

Belongs to the GDNFR family. In terms of assembly, interacts with GDNF ligand and RET: forms a 2:2:2 ternary complex composed of GDNF ligand, GFRA1 and RET receptor. Interacts with SORL1, either alone or in complex with GDNF. Interaction between SORL1 and GFRA1 leads to GFRA1 internalization, but not degradation. As to expression, expressed in liver, brain, kidney and cochlea.

Its subcellular location is the cell membrane. It is found in the golgi apparatus. The protein resides in the trans-Golgi network. It localises to the endosome. The protein localises to the multivesicular body. Functionally, coreceptor for GDNF, a neurotrophic factor that enhances survival and morphological differentiation of dopaminergic neurons and increases their high-affinity dopamine uptake. GDNF-binding leads to autophosphorylation and activation of the RET receptor. This is GDNF family receptor alpha-1 (Gfra1) from Rattus norvegicus (Rat).